The primary structure comprises 416 residues: Glutamyl-tRNA reductase (416 aa).

Residues T49–R52, S105, E110–Q112, and Q116 contribute to the substrate site. C50 acts as the Nucleophile in catalysis. G185–I190 contacts NADP(+).

Belongs to the glutamyl-tRNA reductase family. In terms of assembly, homodimer.

It catalyses the reaction (S)-4-amino-5-oxopentanoate + tRNA(Glu) + NADP(+) = L-glutamyl-tRNA(Glu) + NADPH + H(+). Its pathway is porphyrin-containing compound metabolism; protoporphyrin-IX biosynthesis; 5-aminolevulinate from L-glutamyl-tRNA(Glu): step 1/2. In terms of biological role, catalyzes the NADPH-dependent reduction of glutamyl-tRNA(Glu) to glutamate 1-semialdehyde (GSA). The polypeptide is Glutamyl-tRNA reductase (Shewanella denitrificans (strain OS217 / ATCC BAA-1090 / DSM 15013)).